A 543-amino-acid polypeptide reads, in one-letter code: Chaperonin GroEL (543 aa).

ATP contacts are provided by residues 29–32 (TLGP), 86–90 (DGTTT), glycine 413, 476–478 (NAA), and aspartate 492.

Belongs to the chaperonin (HSP60) family. As to quaternary structure, forms a cylinder of 14 subunits composed of two heptameric rings stacked back-to-back. Interacts with the co-chaperonin GroES.

It localises to the cytoplasm. The catalysed reaction is ATP + H2O + a folded polypeptide = ADP + phosphate + an unfolded polypeptide.. Together with its co-chaperonin GroES, plays an essential role in assisting protein folding. The GroEL-GroES system forms a nano-cage that allows encapsulation of the non-native substrate proteins and provides a physical environment optimized to promote and accelerate protein folding. The chain is Chaperonin GroEL from Streptococcus pyogenes serotype M5 (strain Manfredo).